We begin with the raw amino-acid sequence, 667 residues long: MAALLLLLPLLLLLPLLLKLDVWPQLRWLPADLAFTVRALRCKRALRARALAAAAADPESSESGCSLAWRLAYLAREQPTHTFLIHGAQRFSYAEAERESNRIARAFLRARGWTGGRRGSGRGSTEEGARVAPPAGDAAARGTTAPPLAPGATVALLLPAGPDFLWIWFGLAKAGLRTAFVPTALRRGPLLHCLRSCGASALVLATEFLESLEPDLPALRAMGLHLWATGPETNVAGISNLLSEAADQVDEPVPGYLSAPQNIMDTCLYIFTSGTTGLPKAARISHLKVLQCQGFYHLCGVHQEDVIYLALPLYHMSGSLLGIVGCLGIGATVVLKPKFSASQFWDDCQKHRVTVFQYIGELCRYLVNQPPSKAECDHKVRLAVGSGLRPDTWERFLRRFGPLQILETYGMTEGNVATFNYTGRQGAVGRASWLYKHIFPFSLIRYDVMTGEPIRNAQGHCMTTSPGEPGLLVAPVSQQSPFLGYAGAPELAKDKLLKDVFWSGDVFFNTGDLLVCDEQGFLHFHDRTGDTIRWKGENVATTEVAEVLETLDFLQEVNIYGVTVPGHEGRAGMAALALRPPQALNLVQLYSHVSENLPPYARPRFLRLQESLATTETFKQQKVRMANEGFDPSVLSDPLYVLDQDIGAYLPLTPARYSALLSGDLRI.

A helical transmembrane segment spans residues 3–23 (ALLLLLPLLLLLPLLLKLDVW). The disordered stretch occupies residues 114–144 (TGGRRGSGRGSTEEGARVAPPAGDAAARGTT). Residues 130–144 (RVAPPAGDAAARGTT) show a composition bias toward low complexity. ATP contacts are provided by residues 272 to 276 (TSGTT), histidine 315, threonine 412, aspartate 512, arginine 527, and lysine 619.

The protein belongs to the ATP-dependent AMP-binding enzyme family. Expressed at high levels in adrenal gland, testis and ovary. Expressed at lower levels in adult brain. Found in adrenal cortical cells, spermatocytes and interstitial cells of the testis, theca cells of the ovary, cerebral cortical neurons, and cerebellar Purkinje cells (at protein level).

The protein resides in the mitochondrion membrane. The enzyme catalyses a fatty acid(in) = a fatty acid(out). It carries out the reaction a long-chain fatty acid + ATP + CoA = a long-chain fatty acyl-CoA + AMP + diphosphate. It catalyses the reaction (5Z,8Z,11Z,14Z)-eicosatetraenoate + ATP + CoA = (5Z,8Z,11Z,14Z)-eicosatetraenoyl-CoA + AMP + diphosphate. The catalysed reaction is hexadecanoate + ATP + CoA = hexadecanoyl-CoA + AMP + diphosphate. The enzyme catalyses (9Z)-octadecenoate + ATP + CoA = (9Z)-octadecenoyl-CoA + AMP + diphosphate. It carries out the reaction (9Z,12Z)-octadecadienoate + ATP + CoA = (9Z,12Z)-octadecadienoyl-CoA + AMP + diphosphate. It catalyses the reaction a very long-chain fatty acid + ATP + CoA = a very long-chain fatty acyl-CoA + AMP + diphosphate. The catalysed reaction is tetracosanoate + ATP + CoA = tetracosanoyl-CoA + AMP + diphosphate. Functionally, mainly functions as an acyl-CoA ligase catalyzing the ATP-dependent formation of fatty acyl-CoA using LCFA and very-long-chain fatty acids (VLCFA) as substrates. Can mediate the levels of long-chain fatty acids (LCFA) in the cell by facilitating their transport across membranes. The protein is Long-chain fatty acid transport protein 3 (Slc27a3) of Mus musculus (Mouse).